Here is a 298-residue protein sequence, read N- to C-terminus: Protease HtpX (298 aa).

Transmembrane regions (helical) follow at residues 4-24 (IALY…TLSL) and 41-61 (TSLL…SLLI). Histidine 147 provides a ligand contact to Zn(2+). Glutamate 148 is an active-site residue. Position 151 (histidine 151) interacts with Zn(2+). The next 2 helical transmembrane spans lie at 162–182 (LIQG…GYVI) and 193–213 (GLGF…GIAA). Glutamate 225 provides a ligand contact to Zn(2+).

This sequence belongs to the peptidase M48B family. Zn(2+) serves as cofactor.

Its subcellular location is the cell inner membrane. The protein is Protease HtpX of Alcanivorax borkumensis (strain ATCC 700651 / DSM 11573 / NCIMB 13689 / SK2).